Here is a 213-residue protein sequence, read N- to C-terminus: Orotate phosphoribosyltransferase (213 aa).

Lysine 26 provides a ligand contact to 5-phospho-alpha-D-ribose 1-diphosphate. 34–35 (FF) serves as a coordination point for orotate. 5-phospho-alpha-D-ribose 1-diphosphate contacts are provided by residues 72–73 (YK), arginine 99, lysine 100, lysine 103, histidine 105, and 124–132 (DDVITAGTA). Threonine 128 and arginine 156 together coordinate orotate.

The protein belongs to the purine/pyrimidine phosphoribosyltransferase family. PyrE subfamily. As to quaternary structure, homodimer. Mg(2+) serves as cofactor.

The enzyme catalyses orotidine 5'-phosphate + diphosphate = orotate + 5-phospho-alpha-D-ribose 1-diphosphate. It functions in the pathway pyrimidine metabolism; UMP biosynthesis via de novo pathway; UMP from orotate: step 1/2. Its function is as follows. Catalyzes the transfer of a ribosyl phosphate group from 5-phosphoribose 1-diphosphate to orotate, leading to the formation of orotidine monophosphate (OMP). This chain is Orotate phosphoribosyltransferase, found in Yersinia enterocolitica serotype O:8 / biotype 1B (strain NCTC 13174 / 8081).